A 3432-amino-acid chain; its full sequence is Hybrid signal transduction histidine kinase G (3432 aa).

Composition is skewed to low complexity over residues His-44–Asn-68, Ser-76–Asn-90, and Gln-126–Gln-145. Disordered stretches follow at residues His-44–Ser-109 and Asp-124–Asn-240. Polar residues predominate over residues Thr-146–Gly-157. 2 stretches are compositionally biased toward low complexity: residues Thr-165–His-177 and Lys-187–Asn-238. The Protein kinase domain maps to Leu-263–Phe-792. ATP contacts are provided by residues Tyr-269–Phe-277 and Lys-305. The span at Asn-399–Asn-419 shows a compositional bias: low complexity. 2 disordered regions span residues Asn-399–Ile-426 and Phe-443–Leu-542. The span at Phe-443 to Leu-467 shows a compositional bias: polar residues. A compositionally biased stretch (low complexity) spans Asn-468–Ser-479. Residues Pro-480–Ile-490 show a composition bias toward polar residues. Positions Thr-491–Asn-508 are enriched in low complexity. Over residues Ser-509 to Thr-525 the composition is skewed to gly residues. Residue Asp-585 is the Proton acceptor; for protein kinase activity of the active site. The segment at Gly-863–Asp-1121 is AAA. Residue Gly-871–Thr-878 participates in ATP binding. 2 disordered regions span residues Asn-1040–Ile-1077 and Thr-1261–Asp-1290. Low complexity predominate over residues Thr-1261–Asn-1288. The next 2 membrane-spanning stretches (helical) occupy residues Val-1567–Leu-1587 and Ile-1599–Phe-1619. The TPR repeat unit spans residues Ser-1965–Phe-1998. Disordered regions lie at residues Glu-2071–Ile-2095 and Gly-2299–Lys-2349. Over residues Ser-2073–Ile-2095 the composition is skewed to low complexity. In terms of domain architecture, GAF spans Tyr-2215–Asn-2465. The 279-residue stretch at Asn-2491–Lys-2769 folds into the Histidine kinase domain. At His-2494 the chain carries Phosphohistidine; by autocatalysis. A compositionally biased stretch (low complexity) spans Thr-2637–Asp-2648. 5 disordered regions span residues Thr-2637 to Leu-2673, Leu-2785 to Asn-2815, Leu-2917 to Ser-3030, Asn-3134 to Tyr-3160, and Asn-3247 to Thr-3281. A compositionally biased stretch (acidic residues) spans Asn-2649–Leu-2673. Composition is skewed to low complexity over residues Asn-2787–Asn-2815, Leu-2935–Asn-3029, and Asn-3134–Asn-3145. One can recognise a Response regulatory domain in the interval Lys-3305 to Gly-3424. Position 3356 is a 4-aspartylphosphate (Asp-3356).

Belongs to the protein kinase superfamily. Ser/Thr protein kinase family. In terms of processing, activation probably requires transfer of a phosphate group between a histidine in the kinase core (transmitter) domain and an aspartate of the receiver domain.

The protein localises to the membrane. The enzyme catalyses ATP + protein L-histidine = ADP + protein N-phospho-L-histidine.. It catalyses the reaction L-seryl-[protein] + ATP = O-phospho-L-seryl-[protein] + ADP + H(+). It carries out the reaction L-threonyl-[protein] + ATP = O-phospho-L-threonyl-[protein] + ADP + H(+). Its function is as follows. Acts as a receptor histidine kinase for a signal transduction pathway. This protein undergoes an ATP-dependent autophosphorylation at a conserved histidine residue in the kinase core, and a phosphoryl group is then transferred to a conserved aspartate residue in the receiver domain. The polypeptide is Hybrid signal transduction histidine kinase G (dhkG) (Dictyostelium discoideum (Social amoeba)).